The primary structure comprises 389 residues: Glutamate 5-kinase (389 aa).

An ATP-binding site is contributed by Lys-16. Substrate is bound by residues Ser-56, Asp-143, and Asn-155. 175-176 serves as a coordination point for ATP; it reads SD. The 78-residue stretch at 281–358 folds into the PUA domain; sequence AGGLHVDDGA…AEIEAILGYP (78 aa).

Belongs to the glutamate 5-kinase family.

The protein resides in the cytoplasm. It catalyses the reaction L-glutamate + ATP = L-glutamyl 5-phosphate + ADP. Its pathway is amino-acid biosynthesis; L-proline biosynthesis; L-glutamate 5-semialdehyde from L-glutamate: step 1/2. Its function is as follows. Catalyzes the transfer of a phosphate group to glutamate to form L-glutamate 5-phosphate. The protein is Glutamate 5-kinase of Rhizobium leguminosarum bv. trifolii (strain WSM2304).